We begin with the raw amino-acid sequence, 337 residues long: DNA-directed RNA polymerase subunit alpha (337 aa).

Residues 1-233 (MVREKVTVST…DLFIPFLHIE (233 aa)) are alpha N-terminal domain (alpha-NTD). The alpha C-terminal domain (alpha-CTD) stretch occupies residues 265-337 (KKIALKSIFI…FVIDLAKNEF (73 aa)).

This sequence belongs to the RNA polymerase alpha chain family. In plastids the minimal PEP RNA polymerase catalytic core is composed of four subunits: alpha, beta, beta', and beta''. When a (nuclear-encoded) sigma factor is associated with the core the holoenzyme is formed, which can initiate transcription.

The protein localises to the plastid. It localises to the chloroplast. The enzyme catalyses RNA(n) + a ribonucleoside 5'-triphosphate = RNA(n+1) + diphosphate. DNA-dependent RNA polymerase catalyzes the transcription of DNA into RNA using the four ribonucleoside triphosphates as substrates. In Nicotiana tomentosiformis (Tobacco), this protein is DNA-directed RNA polymerase subunit alpha.